Reading from the N-terminus, the 103-residue chain is Small ribosomal subunit protein uS10 (103 aa).

This sequence belongs to the universal ribosomal protein uS10 family. Part of the 30S ribosomal subunit.

Functionally, involved in the binding of tRNA to the ribosomes. The polypeptide is Small ribosomal subunit protein uS10 (Natranaerobius thermophilus (strain ATCC BAA-1301 / DSM 18059 / JW/NM-WN-LF)).